Here is a 469-residue protein sequence, read N- to C-terminus: Transcription factor SOX-10 (469 aa).

5 disordered regions span residues 1–70 (MAEE…DDDK), 163–203 (LRMQ…QGGA), 215–278 (LDHR…DFGN), 357–378 (AQVK…QPST), and 436–469 (RPLY…LSRP). A compositionally biased stretch (low complexity) spans 23 to 32 (LSPGSAPSLG). Phosphoserine is present on Ser-24. A compositionally biased stretch (gly residues) spans 33-44 (PDGGGGGGGGSG). Positions 65–105 (EADDDKFPVCIREAVSQVLSGYDWTLVPMPVRVNGASKSKP) are dimerization (DIM). A DNA-binding region (HMG box) is located at residues 107-175 (VKRPMNAFMV…QHKKDHPDYK (69 aa)). 2 stretches are compositionally biased toward basic and acidic residues: residues 163–176 (LRMQ…DYKY) and 257–274 (ADPK…KPHI). The segment at 231-313 (PEHPSGQSHG…LPPNGHPGHV (83 aa)) is transactivation domain (TAM). The segment at 356–469 (KAQVKTETAG…QPVYTTLSRP (114 aa)) is transactivation domain (TAC). Residues 443–469 (SDPSPSGPQSHSPTHWEQPVYTTLSRP) are compositionally biased toward polar residues.

As to quaternary structure, monomer. Interacts with ARMCX3 at the mitochondrial outer membrane surface. Interacts with PAX3.

It localises to the cytoplasm. It is found in the nucleus. The protein localises to the mitochondrion outer membrane. In terms of biological role, transcription factor that plays a central role in developing and mature glia. Specifically activates expression of myelin genes, during oligodendrocyte (OL) maturation, such as DUSP15 and MYRF, thereby playing a central role in oligodendrocyte maturation and CNS myelination. Once induced, MYRF cooperates with SOX10 to implement the myelination program. Transcriptional activator of MITF, acting synergistically with PAX3. Transcriptional activator of MBP, via binding to the gene promoter. This chain is Transcription factor SOX-10 (SOX10), found in Sus scrofa (Pig).